Reading from the N-terminus, the 574-residue chain is Cytochrome P450 4g15 (574 aa).

The tract at residues 288–327 is disordered; that stretch reads REREQNGGVDQTPSTAGSDEKDREKDKEKASPVAGLSYGQ. The segment covering 295 to 304 has biased composition (polar residues); it reads GVDQTPSTAG. The segment covering 305-317 has biased composition (basic and acidic residues); that stretch reads SDEKDREKDKEKA. The heme site is built by Glu-379 and Cys-519.

It belongs to the cytochrome P450 family. The cofactor is heme. As to expression, expressed in larval brain cortex cells and ring glands and weakly in larval digestive system and adult nervous system.

Its subcellular location is the endoplasmic reticulum membrane. It is found in the microsome membrane. Functionally, probably involved in steroid hormones biosynthesis. The protein is Cytochrome P450 4g15 (Cyp4g15) of Drosophila melanogaster (Fruit fly).